The following is an 850-amino-acid chain: Adenylate cyclase (850 aa).

Residues 1–535 form a catalytic region; the sequence is MYLYIETLKQ…DISHHFPLRL (535 aa). Residues 541-850 are regulatory; it reads KALYSPCEIR…SLPTKQCQLH (310 aa).

It belongs to the adenylyl cyclase class-1 family.

It is found in the cytoplasm. The enzyme catalyses ATP = 3',5'-cyclic AMP + diphosphate. The regulatory domain is involved in the regulation of cyclase activity by the carbon source. The polypeptide is Adenylate cyclase (cya) (Yersinia pestis).